Reading from the N-terminus, the 296-residue chain is Methylsterol monooxygenase erg25B (296 aa).

The next 3 membrane-spanning stretches (helical) occupy residues Ile50–Ile70, Phe98–Ala118, and Thr125–Leu145. One can recognise a Fatty acid hydroxylase domain in the interval Ala140–Thr276. A Histidine box-1 motif is present at residues His154–His158. Positions His167–His171 match the Histidine box-2 motif. Residues Ile201–Leu221 form a helical membrane-spanning segment. Positions His251–Glu257 match the Histidine box-3 motif.

Belongs to the sterol desaturase family. Fe cation serves as cofactor.

The protein localises to the endoplasmic reticulum membrane. It participates in steroid metabolism; ergosterol biosynthesis. Sterol-C4-methyl oxidase; part of the third module of ergosterol biosynthesis pathway that includes the late steps of the pathway. Erg25B is a catalytic component of the C-4 demethylation complex that catalyzes the conversion of 4,4-dimethylfecosterol into fecosterol via 4-methylfecosterol. The third module or late pathway involves the ergosterol synthesis itself through consecutive reactions that mainly occur in the endoplasmic reticulum (ER) membrane. Firstly, the squalene synthase erg9 catalyzes the condensation of 2 farnesyl pyrophosphate moieties to form squalene, which is the precursor of all steroids. Squalene synthase is crucial for balancing the incorporation of farnesyl diphosphate (FPP) into sterol and nonsterol isoprene synthesis. Secondly, squalene is converted into lanosterol by the consecutive action of the squalene epoxidase erg1 and the lanosterol synthase erg7. Then, the delta(24)-sterol C-methyltransferase erg6 methylates lanosterol at C-24 to produce eburicol. Eburicol is the substrate of the sterol 14-alpha demethylase encoded by cyp51A and cyp51B, to yield 4,4,24-trimethyl ergosta-8,14,24(28)-trienol. The C-14 reductase erg24 then reduces the C14=C15 double bond which leads to 4,4-dimethylfecosterol. A sequence of further demethylations at C-4, involving the C-4 demethylation complex containing the C-4 methylsterol oxidases erg25A or erg25B, the sterol-4-alpha-carboxylate 3-dehydrogenase erg26 and the 3-keto-steroid reductase erg27, leads to the production of fecosterol via 4-methylfecosterol. The C-8 sterol isomerase erg2 then catalyzes the reaction which results in unsaturation at C-7 in the B ring of sterols and thus converts fecosterol to episterol. The sterol-C5-desaturase erg3B then catalyzes the introduction of a C-5 double bond in the B ring to produce 5-dehydroepisterol. The 2 other sterol-C5-desaturases, erg3A and erg3C, seem to be less important in ergosterol biosynthesis. The C-22 sterol desaturase erg5 further converts 5-dehydroepisterol into ergosta-5,7,22,24(28)-tetraen-3beta-ol by forming the C-22(23) double bond in the sterol side chain. Finally, ergosta-5,7,22,24(28)-tetraen-3beta-ol is substrate of the C-24(28) sterol reductases erg4A and erg4B to produce ergosterol. Possible alternative sterol biosynthetic pathways might exist from fecosterol to ergosterol, depending on the activities of the erg3 isoforms. This chain is Methylsterol monooxygenase erg25B, found in Aspergillus fumigatus (strain ATCC MYA-4609 / CBS 101355 / FGSC A1100 / Af293) (Neosartorya fumigata).